We begin with the raw amino-acid sequence, 259 residues long: Kynurenine formamidase (259 aa).

An HGGXW motif is present at residues 34–38 (HGGAW). Catalysis depends on serine 103, which acts as the Nucleophile. Active-site residues include aspartate 196 and histidine 228.

The protein belongs to the kynurenine formamidase family. Homodimer.

It catalyses the reaction N-formyl-L-kynurenine + H2O = L-kynurenine + formate + H(+). It participates in amino-acid degradation; L-tryptophan degradation via kynurenine pathway; L-kynurenine from L-tryptophan: step 2/2. In terms of biological role, catalyzes the hydrolysis of N-formyl-L-kynurenine to L-kynurenine, the second step in the kynurenine pathway of tryptophan degradation. Kynurenine may be further oxidized to nicotinic acid, NAD(H) and NADP(H). Required for elimination of toxic metabolites. The sequence is that of Kynurenine formamidase from Meyerozyma guilliermondii (strain ATCC 6260 / CBS 566 / DSM 6381 / JCM 1539 / NBRC 10279 / NRRL Y-324) (Yeast).